Consider the following 255-residue polypeptide: Large ribosomal subunit protein uL2 (255 aa).

The tract at residues 201–229 (YAHPHGGGSHQQGGTPVKKNAPPGQKVGF) is disordered.

The protein belongs to the universal ribosomal protein uL2 family. In terms of assembly, part of the 50S ribosomal subunit. Forms a bridge to the 30S subunit in the 70S ribosome.

Its function is as follows. One of the primary rRNA binding proteins. Required for association of the 30S and 50S subunits to form the 70S ribosome, for tRNA binding and peptide bond formation. It has been suggested to have peptidyltransferase activity; this is somewhat controversial. Makes several contacts with the 16S rRNA in the 70S ribosome. The chain is Large ribosomal subunit protein uL2 from Caldivirga maquilingensis (strain ATCC 700844 / DSM 13496 / JCM 10307 / IC-167).